Here is a 250-residue protein sequence, read N- to C-terminus: Mycofactocin precursor peptide peptidase (250 aa).

Glutamate 38, histidine 40, aspartate 49, histidine 127, and glutamate 166 together coordinate a divalent metal cation.

It belongs to the creatininase superfamily. In terms of assembly, homooctamer. It depends on Fe(2+) as a cofactor. Requires Zn(2+) as cofactor.

It carries out the reaction [mycofactocin precursor peptide]-C-terminal glycyl-N-{5-[(4-hydroxyphenyl)methyl]-4,4-dimethyl-2-oxopyrrolidin-3-yl}acetamide + H2O = [mycofactocin precursor peptide]-C-terminal glycine + 3-amino-5-[(4-hydroxyphenyl)methyl]-4,4-dimethyl-2-pyrrolidin-2-one. Peptidase involved in the biosynthesis of the enzyme cofactor mycofactocin (MFT). Catalyzes cleavage of the MftC-modified MftA peptide to liberate its final two residues, which consist of a cross-linked valine-decarboxylated tyrosine dipeptide (named 3-amino-5-[(4-hydroxyphenyl)methyl]-4,4-dimethyl-2-pyrrolidin-2-one or ADHP). The sequence is that of Mycofactocin precursor peptide peptidase from Mycobacterium ulcerans (strain Agy99).